The sequence spans 131 residues: UPF0102 protein YraN (131 aa).

The segment covering 1-19 (MATVPTRSGSPRQLTTKQT) has biased composition (polar residues). The interval 1 to 21 (MATVPTRSGSPRQLTTKQTGD) is disordered.

Belongs to the UPF0102 family.

The polypeptide is UPF0102 protein YraN (Escherichia coli O7:K1 (strain IAI39 / ExPEC)).